The following is a 1716-amino-acid chain: DNA-directed RNA polymerase I subunit RPA1 (1716 aa).

Residues Cys-64, Cys-67, Cys-74, His-77, Cys-104, and Cys-107 each contribute to the Zn(2+) site. A clamp region spans residues 110-201 (LTCPRAAIHL…VAHFWKTHMA (92 aa)). 2 residues coordinate Zn(2+): Cys-205 and Cys-208. Positions 327–433 (FTNGQTVNLQ…IRQILEKKEG (107 aa)) are clamp. Residues 410–423 (DSDMDKLMLEKYPG) form a rudder region. 3 residues coordinate DNA: Lys-431, Arg-436, and Arg-443. The tract at residues 475–549 (YPQPVTPWNV…QGAKVVCRHV (75 aa)) is involved in RRN3 binding to Pol I complex. Arg-559 provides a ligand contact to RNA. Mg(2+) contacts are provided by Asp-595, Asp-597, and Asp-599. Asp-599 is a binding site for RNA. Positions 812–890 (KPNADVMRQR…NEINKACMPF (79 aa)) are funnel. The bridging helix stretch occupies residues 967–1008 (RPPEFFFHCMAGREGLVDTAVKTSRSGYLQRCIIKHLEGLVI). The interval 1067 to 1162 (ADPQKVLRHF…SLSVWRPDIH (96 aa)) is mediates the interaction with TOP2A. Residues 1214-1255 (PGEAVGLLAAQSIGEPSTQMTLNTFHFAGRGEMNVTLGIPRL) are trigger loop. Arg-1256 is a binding site for DNA. The segment at 1368–1493 (ASAFRSVNTR…RHSRPQGAEA (126 aa)) is disordered. The span at 1380–1397 (TQKDLDDTEDSGRNRREE) shows a compositional bias: basic and acidic residues. 2 stretches are compositionally biased toward acidic residues: residues 1398–1419 (ERDE…DADA) and 1429–1451 (EEEV…VQEE). Residues 1452–1464 (ENIKGEGAHQTHE) are compositionally biased toward basic and acidic residues. Over residues 1465-1477 (PDEEEGSGLEEES) the composition is skewed to acidic residues.

This sequence belongs to the RNA polymerase beta' chain family. In terms of assembly, component of the RNA polymerase I (Pol I) complex consisting of 13 subunits: a ten-subunit catalytic core composed of POLR1A/RPA1, POLR1B/RPA2, POLR1C/RPAC1, POLR1D/RPAC2, POLR1H/RPA12, POLR2E/RPABC1, POLR2F/RPABC2, POLR2H/RPABC3, POLR2K/RPABC4 and POLR2L/RPABC5; a mobile stalk subunit POLR1F/RPA43 protruding from the core and additional subunits homologous to general transcription factors POLR1E/RPA49 and POLR1G/RPA34. Part of Pol I pre-initiation complex (PIC), in which Pol I core assembles with RRN3 and promoter-bound UTBF and SL1/TIF-IB complex. Interacts (via dock II domain) with TOP2A; this interaction may assist Pol I transcription initiation by releasing supercoils occurring during DNA unwinding. Interacts with CAVIN1; this interaction induces the dissociation of Pol I complex paused at rDNA terminator sequences. Interacts with MYO1C. Interacts with ERBB2. Interacts with DDX11. Interacts with RECQL5. The cofactor is Mg(2+). Phosphorylated.

The protein resides in the nucleus. It localises to the nucleolus. Its subcellular location is the chromosome. It carries out the reaction RNA(n) + a ribonucleoside 5'-triphosphate = RNA(n+1) + diphosphate. Its function is as follows. Catalytic core component of RNA polymerase I (Pol I), a DNA-dependent RNA polymerase which synthesizes ribosomal RNA precursors using the four ribonucleoside triphosphates as substrates. Transcribes 47S pre-rRNAs from multicopy rRNA gene clusters, giving rise to 5.8S, 18S and 28S ribosomal RNAs. Pol I-mediated transcription cycle proceeds through transcription initiation, transcription elongation and transcription termination stages. During transcription initiation, Pol I pre-initiation complex (PIC) is recruited by the selectivity factor 1 (SL1/TIF-IB) complex bound to the core promoter that precedes an rDNA repeat unit. The PIC assembly bends the promoter favoring the formation of the transcription bubble and promoter escape. Once the polymerase has escaped from the promoter it enters the elongation phase during which RNA is actively polymerized, based on complementarity with the template DNA strand. Highly processive, assembles in structures referred to as 'Miller trees' where many elongating Pol I complexes queue and transcribe the same rDNA coding regions. At terminator sequences downstream of the rDNA gene, PTRF interacts with Pol I and halts Pol I transcription leading to the release of the RNA transcript and polymerase from the DNA. Forms Pol I active center together with the second largest subunit POLR1B/RPA2. Appends one nucleotide at a time to the 3' end of the nascent RNA, with POLR1A/RPA1 contributing a Mg(2+)-coordinating DxDGD motif, and POLR1B/RPA2 participating in the coordination of a second Mg(2+) ion and providing lysine residues believed to facilitate Watson-Crick base pairing between the incoming nucleotide and the template base. Typically, Mg(2+) ions direct a 5' nucleoside triphosphate to form a phosphodiester bond with the 3' hydroxyl of the preceding nucleotide of the nascent RNA, with the elimination of pyrophosphate. Has proofreading activity: Pauses and backtracks to allow the cleavage of a missincorporated nucleotide via POLR1H/RPA12. High Pol I processivity is associated with decreased transcription fidelity. The chain is DNA-directed RNA polymerase I subunit RPA1 from Rattus norvegicus (Rat).